A 170-amino-acid polypeptide reads, in one-letter code: uncharacterized protein (170 aa).

The signal sequence occupies residues 1 to 28; it reads MTGGVMSQKFVVGAGLLVCSVCSLSAMA.

This sequence belongs to the fimbrial protein family.

Part of the yfcOPQRSUV fimbrial operon. Could contribute to adhesion to various surfaces in specific environmental niches. Increases adhesion to eukaryotic T24 bladder epithelial cells in the absence of fim genes. This is an uncharacterized protein from Escherichia coli (strain K12).